A 95-amino-acid polypeptide reads, in one-letter code: NELL2-interacting cell ontogeny regulator 1 (95 aa).

The N-terminal stretch at 1–34 (MAPPPACRSPMSPPPPPLLLLLLSLALLGARARA) is a signal peptide.

Belongs to the NICOL family. In terms of assembly, interacts with NELL2; triggers epididymal differentiation. Interacts with cell surface receptor TFRC; the interaction mediates uptake of NICOL1 into fibroblasts. Detected in the brain (at protein level). Also expressed at low levels in the kidney, primarily in tubular epithelial cells.

It is found in the secreted. The protein resides in the cytoplasm. Its subcellular location is the perinuclear region. Functionally, mRNA-binding protein which interacts with a range of target mRNAs including SERPINE1, ACTA2, CCN2 and COL4A1 and may promote extracellular matrix production. Binds to the 3'-UTR of SERPINE1 mRNA and stabilizes the mRNA, possibly by competing for binding with SERBP1 and preventing SERBP1-mediated mRNA degradation. Also binds to the 3'-UTR of ACTA2. Testis-derived lumicrine factor that triggers epididymal differentiation and sperm maturation. This Homo sapiens (Human) protein is NELL2-interacting cell ontogeny regulator 1.